Here is a 694-residue protein sequence, read N- to C-terminus: Glycine--tRNA ligase beta subunit (694 aa).

It belongs to the class-II aminoacyl-tRNA synthetase family. In terms of assembly, tetramer of two alpha and two beta subunits.

Its subcellular location is the cytoplasm. It catalyses the reaction tRNA(Gly) + glycine + ATP = glycyl-tRNA(Gly) + AMP + diphosphate. This is Glycine--tRNA ligase beta subunit from Lactiplantibacillus plantarum (strain ATCC BAA-793 / NCIMB 8826 / WCFS1) (Lactobacillus plantarum).